Here is a 426-residue protein sequence, read N- to C-terminus: Protein CgeD (426 aa).

To B.subtilis spore coat polysaccharide biosynthesis protein SpsA.

In terms of biological role, may be involved in maturation of the outermost layer of the spore. The protein is Protein CgeD (cgeD) of Bacillus subtilis (strain 168).